Reading from the N-terminus, the 223-residue chain is Noggin-3 (223 aa).

The first 23 residues, 1–23 (MDNIPYFLATVLIFSLGFRIEEG), serve as a signal peptide directing secretion. N-linked (GlcNAc...) asparagine glycosylation is found at Asn60 and Asn93.

Belongs to the noggin family. As to quaternary structure, homodimer; disulfide-linked.

It is found in the secreted. Functionally, may function as an inhibitor of bone morphogenetic proteins (BMP) signaling during later stages of development including late phases of dorsoventral patterning, to refine the early pattern set up by the interaction of chordino and BMP2/4. Not involved in organizer function or early phases of dorsoventral pattern formation. In Danio rerio (Zebrafish), this protein is Noggin-3 (nog3).